The following is an 83-amino-acid chain: RNA-binding protein Hfq (83 aa).

The 61-residue stretch at 11-71 folds into the Sm domain; it reads DTFLNFVRKN…ISTIMPGQPI (61 aa).

The protein belongs to the Hfq family. In terms of assembly, homohexamer.

In terms of biological role, RNA chaperone that binds small regulatory RNA (sRNAs) and mRNAs to facilitate mRNA translational regulation in response to envelope stress, environmental stress and changes in metabolite concentrations. Also binds with high specificity to tRNAs. The polypeptide is RNA-binding protein Hfq (Methylocella silvestris (strain DSM 15510 / CIP 108128 / LMG 27833 / NCIMB 13906 / BL2)).